The sequence spans 282 residues: Bifunctional protein FolD (282 aa).

NADP(+) is bound by residues 167-169 (GRS) and Ser-192.

Belongs to the tetrahydrofolate dehydrogenase/cyclohydrolase family. In terms of assembly, homodimer.

The enzyme catalyses (6R)-5,10-methylene-5,6,7,8-tetrahydrofolate + NADP(+) = (6R)-5,10-methenyltetrahydrofolate + NADPH. It catalyses the reaction (6R)-5,10-methenyltetrahydrofolate + H2O = (6R)-10-formyltetrahydrofolate + H(+). It participates in one-carbon metabolism; tetrahydrofolate interconversion. Catalyzes the oxidation of 5,10-methylenetetrahydrofolate to 5,10-methenyltetrahydrofolate and then the hydrolysis of 5,10-methenyltetrahydrofolate to 10-formyltetrahydrofolate. In Acidobacterium capsulatum (strain ATCC 51196 / DSM 11244 / BCRC 80197 / JCM 7670 / NBRC 15755 / NCIMB 13165 / 161), this protein is Bifunctional protein FolD.